The chain runs to 426 residues: MIEIIEVQAREILDSRGNPTVEVDVTLSGGATGRAAVPSGASTGTREALELRDTRKKRYLGKGVEKAVENVNTLIGPVLYGMPADEQFMVDSTMIGLDGTANKSKLGANAILGVSMAVARAAADAYELPLYRYLGGIHAKHLPMPMMNIVNGGAHAANSLDIQEFMIIPVGGKTIAECVRMGAEVFHTLKKLLKAKGFATAVGDEGGFAPDLESNEAAIGFIMEAIKKAGYRPGRDVGIALDAAASEFYEKGKYVLKGEGKKLSSKQMVDYYENLIDKYPILSIEDGLAEQDWDNWVMMTDRLGNTTQIVGDDVFVTNPAIFEKGIREGLANSILIKLNQIGTVSETLQAIDMAKQAGYTTVISHRSGETEDAFIADLAVGVNGGQIKTGSLSRSDRIAKYNQLIRIEEALGAGAVLSNDFTAVVR.

Glutamine 163 contacts (2R)-2-phosphoglycerate. Residue glutamate 205 is the Proton donor of the active site. Residues aspartate 242, glutamate 285, and aspartate 312 each coordinate Mg(2+). Residues lysine 337, arginine 366, serine 367, and lysine 388 each coordinate (2R)-2-phosphoglycerate. Lysine 337 serves as the catalytic Proton acceptor.

The protein belongs to the enolase family. Mg(2+) is required as a cofactor.

Its subcellular location is the cytoplasm. The protein localises to the secreted. It localises to the cell surface. It catalyses the reaction (2R)-2-phosphoglycerate = phosphoenolpyruvate + H2O. It functions in the pathway carbohydrate degradation; glycolysis; pyruvate from D-glyceraldehyde 3-phosphate: step 4/5. Functionally, catalyzes the reversible conversion of 2-phosphoglycerate (2-PG) into phosphoenolpyruvate (PEP). It is essential for the degradation of carbohydrates via glycolysis. The polypeptide is Enolase (Desulfosudis oleivorans (strain DSM 6200 / JCM 39069 / Hxd3) (Desulfococcus oleovorans)).